The chain runs to 340 residues: Outer membrane protein B (340 aa).

The signal sequence occupies residues 1–26; that stretch reads MSSKLVNSLRLTFLSFLGIVSTSLDA.

Belongs to the chlamydial OMP family.

The protein resides in the cell outer membrane. In Chlamydia muridarum (strain MoPn / Nigg), this protein is Outer membrane protein B (ompB).